The following is a 473-amino-acid chain: Pre-mRNA-splicing factor prp5 (473 aa).

WD repeat units lie at residues 161 to 191 (GHLG…KIWD), 203 to 233 (GHIA…KCWD), 245 to 275 (GHLS…RVWD), 287 to 317 (GHKS…RLWD), 329 to 358 (HHKK…KHWK), 370 to 399 (GHNA…CFWD), and 419 to 449 (DSEA…KIYK).

The protein belongs to the WD repeat PRL1/PRL2 family. Belongs to the 40S cdc5-associated complex (or cwf complex), a spliceosome sub-complex reminiscent of a late-stage spliceosome composed of the U2, U5 and U6 snRNAs and at least brr2, cdc5, cwf2/prp3, cwf3/syf1, cwf4/syf3, cwf5/ecm2, spp42/cwf6, cwf7/spf27, cwf8, cwf9, cwf10, cwf11, cwf12, prp45/cwf13, cwf14, cwf15, cwf16, cwf17, cwf18, cwf19, cwf20, cwf21, cwf22, cwf23, cwf24, cwf25, cwf26, cyp7/cwf27, cwf28, cwf29/ist3, lea1, msl1, prp5/cwf1, prp10, prp12/sap130, prp17, prp22, sap61, sap62, sap114, sap145, slu7, smb1, smd1, smd3, smf1, smg1 and syf2.

The protein localises to the nucleus. Functionally, required for both cell cycle progression at G2/M and pre-mRNA splicing. Interacts genetically with the PRP4 kinase. This chain is Pre-mRNA-splicing factor prp5 (prp5), found in Schizosaccharomyces pombe (strain 972 / ATCC 24843) (Fission yeast).